A 152-amino-acid polypeptide reads, in one-letter code: Transcriptional regulator MraZ (152 aa).

SpoVT-AbrB domains lie at 5–52 (ATLV…PLPE) and 81–124 (ASEC…DEQT).

It belongs to the MraZ family. In terms of assembly, forms oligomers.

The protein resides in the cytoplasm. The protein localises to the nucleoid. Functionally, negatively regulates its own expression and that of the subsequent genes in the proximal part of the division and cell wall (dcw) gene cluster. Acts by binding directly to DNA. May also regulate the expression of genes outside the dcw cluster. The chain is Transcriptional regulator MraZ from Pectobacterium atrosepticum (strain SCRI 1043 / ATCC BAA-672) (Erwinia carotovora subsp. atroseptica).